A 389-amino-acid polypeptide reads, in one-letter code: PqqA peptide cyclase (389 aa).

Positions 19–234 (VGLPLWLLAE…TNEYRDQLAA (216 aa)) constitute a Radical SAM core domain. [4Fe-4S] cluster-binding residues include Cys-33, Cys-37, and Cys-40.

It belongs to the radical SAM superfamily. PqqE family. Interacts with PqqD. The interaction is necessary for activity of PqqE. [4Fe-4S] cluster is required as a cofactor.

It carries out the reaction [PQQ precursor protein] + S-adenosyl-L-methionine = E-Y cross-linked-[PQQ precursor protein] + 5'-deoxyadenosine + L-methionine + H(+). The protein operates within cofactor biosynthesis; pyrroloquinoline quinone biosynthesis. Catalyzes the cross-linking of a glutamate residue and a tyrosine residue in the PqqA protein as part of the biosynthesis of pyrroloquinoline quinone (PQQ). This Pseudomonas syringae pv. tomato (strain ATCC BAA-871 / DC3000) protein is PqqA peptide cyclase.